The sequence spans 283 residues: 4-diphosphocytidyl-2-C-methyl-D-erythritol kinase (283 aa).

Lysine 12 is an active-site residue. 94–104 contacts ATP; it reads PAQAGLGGGSS. Aspartate 136 is a catalytic residue.

Belongs to the GHMP kinase family. IspE subfamily.

The enzyme catalyses 4-CDP-2-C-methyl-D-erythritol + ATP = 4-CDP-2-C-methyl-D-erythritol 2-phosphate + ADP + H(+). The protein operates within isoprenoid biosynthesis; isopentenyl diphosphate biosynthesis via DXP pathway; isopentenyl diphosphate from 1-deoxy-D-xylulose 5-phosphate: step 3/6. Functionally, catalyzes the phosphorylation of the position 2 hydroxy group of 4-diphosphocytidyl-2C-methyl-D-erythritol. In Acidovorax ebreus (strain TPSY) (Diaphorobacter sp. (strain TPSY)), this protein is 4-diphosphocytidyl-2-C-methyl-D-erythritol kinase.